We begin with the raw amino-acid sequence, 295 residues long: Protoheme IX farnesyltransferase 2 (295 aa).

The next 9 membrane-spanning stretches (helical) occupy residues 9-29 (ITKPGIIFGNVLSVAGGFFLA), 36-56 (LAIFLAAMIGTSLVVASGCVF), 85-105 (VALVYASILGVAGVALLYYVA), 108-128 (LAALFAVIGFVIYVGFYSLYL), 135-155 (GTLVGSLSGAMPPVIGYVAVS), 163-183 (LTLLVMFSLWQMPHSYAIAIF), 209-229 (ILLYILAFLVATLMLTFSGYA), 230-250 (GMSYLAVAAAMGMYWLYMAWT), and 263-283 (KLFVFSIFTITALSVMMSVDF).

This sequence belongs to the UbiA prenyltransferase family. Protoheme IX farnesyltransferase subfamily.

It is found in the cell inner membrane. It catalyses the reaction heme b + (2E,6E)-farnesyl diphosphate + H2O = Fe(II)-heme o + diphosphate. It participates in porphyrin-containing compound metabolism; heme O biosynthesis; heme O from protoheme: step 1/1. Functionally, converts heme B (protoheme IX) to heme O by substitution of the vinyl group on carbon 2 of heme B porphyrin ring with a hydroxyethyl farnesyl side group. The chain is Protoheme IX farnesyltransferase 2 from Pseudomonas fluorescens (strain ATCC BAA-477 / NRRL B-23932 / Pf-5).